A 282-amino-acid polypeptide reads, in one-letter code: tRNA pseudouridine synthase B (282 aa).

Asp-39 acts as the Nucleophile in catalysis.

The protein belongs to the pseudouridine synthase TruB family. Type 1 subfamily.

The enzyme catalyses uridine(55) in tRNA = pseudouridine(55) in tRNA. In terms of biological role, responsible for synthesis of pseudouridine from uracil-55 in the psi GC loop of transfer RNAs. In Borreliella burgdorferi (strain ATCC 35210 / DSM 4680 / CIP 102532 / B31) (Borrelia burgdorferi), this protein is tRNA pseudouridine synthase B.